A 331-amino-acid chain; its full sequence is Tagatose 1,6-diphosphate aldolase 2 (331 aa).

Belongs to the aldolase LacD family.

It carries out the reaction D-tagatofuranose 1,6-bisphosphate = D-glyceraldehyde 3-phosphate + dihydroxyacetone phosphate. It functions in the pathway carbohydrate metabolism; D-tagatose 6-phosphate degradation; D-glyceraldehyde 3-phosphate and glycerone phosphate from D-tagatose 6-phosphate: step 2/2. This chain is Tagatose 1,6-diphosphate aldolase 2 (lacD2), found in Enterococcus faecalis (strain ATCC 700802 / V583).